Reading from the N-terminus, the 213-residue chain is UPF0301 protein Aave_0907 (213 aa).

The tract at residues 93–120 (MGPSSGKQAAGEGGAQAEGEGAEESAYA) is disordered.

This sequence belongs to the UPF0301 (AlgH) family.

This chain is UPF0301 protein Aave_0907, found in Paracidovorax citrulli (strain AAC00-1) (Acidovorax citrulli).